Consider the following 263-residue polypeptide: Elongation factor Ts (263 aa).

An involved in Mg(2+) ion dislocation from EF-Tu region spans residues 82–85; that stretch reads TDFV. Over residues 221 to 251 the composition is skewed to low complexity; sequence APPAVVEAPVAETPEPAVAETPEAKPAATES. The disordered stretch occupies residues 221–263; it reads APPAVVEAPVAETPEPAVAETPEAKPAATESKPAKSKSAKKKK. Residues 254–263 show a composition bias toward basic residues; it reads AKSKSAKKKK.

The protein belongs to the EF-Ts family.

It is found in the cytoplasm. Functionally, associates with the EF-Tu.GDP complex and induces the exchange of GDP to GTP. It remains bound to the aminoacyl-tRNA.EF-Tu.GTP complex up to the GTP hydrolysis stage on the ribosome. The protein is Elongation factor Ts of Cyanothece sp. (strain PCC 7425 / ATCC 29141).